Here is a 94-residue protein sequence, read N- to C-terminus: Cell division protein FtsB (94 aa).

Over 1 to 3 (MRT) the chain is Cytoplasmic. The chain crosses the membrane as a helical span at residues 4–21 (FAIFLLIALGWLQYTLWF). Residues 22–94 (GKNGMSDYAQ…YRIIDENSEG (73 aa)) are Periplasmic-facing. Positions 33–71 (SNDVALQEEVNQGLRNRNEQMFAEIDDLKKGSEAIEERA) form a coiled coil.

It belongs to the FtsB family. In terms of assembly, part of a complex composed of FtsB, FtsL and FtsQ.

The protein resides in the cell inner membrane. Functionally, essential cell division protein. May link together the upstream cell division proteins, which are predominantly cytoplasmic, with the downstream cell division proteins, which are predominantly periplasmic. The polypeptide is Cell division protein FtsB (Aliivibrio fischeri (strain ATCC 700601 / ES114) (Vibrio fischeri)).